A 580-amino-acid chain; its full sequence is Multidrug resistance-like ATP-binding protein MdlB (580 aa).

One can recognise an ABC transmembrane type-1 domain in the interval Leu25 to Gln310. The next 6 helical transmembrane spans lie at Ile26–Ile46, Leu61–Leu81, Ile150–Val170, Phe173–Leu193, Leu247–Phe267, and Met268–Ile288. An ABC transporter domain is found at Ile341–Phe575. Residue Gly375–Ser382 participates in ATP binding.

This sequence belongs to the ABC transporter superfamily. Drug exporter-2 (TC 3.A.1.117) family.

It is found in the cell membrane. It catalyses the reaction ATP + H2O + xenobioticSide 1 = ADP + phosphate + xenobioticSide 2.. In Buchnera aphidicola subsp. Acyrthosiphon pisum (strain APS) (Acyrthosiphon pisum symbiotic bacterium), this protein is Multidrug resistance-like ATP-binding protein MdlB (mdlB).